Consider the following 123-residue polypeptide: Mediator of RNA polymerase II transcription subunit 9 (123 aa).

Residues 95–123 (WQLHIQEKKIELEKKTKHLQRLRESIQKQ) adopt a coiled-coil conformation.

The protein belongs to the Mediator complex subunit 9 family. As to quaternary structure, component of the Mediator complex.

It is found in the nucleus. Functionally, component of the Mediator complex, a coactivator involved in the regulated transcription of nearly all RNA polymerase II-dependent genes. Mediator functions as a bridge to convey information from gene-specific regulatory proteins to the basal RNA polymerase II transcription machinery. Mediator is recruited to promoters by direct interactions with regulatory proteins and serves as a scaffold for the assembly of a functional preinitiation complex with RNA polymerase II and the general transcription factors. This chain is Mediator of RNA polymerase II transcription subunit 9 (CSE2), found in Kluyveromyces lactis (strain ATCC 8585 / CBS 2359 / DSM 70799 / NBRC 1267 / NRRL Y-1140 / WM37) (Yeast).